A 1069-amino-acid polypeptide reads, in one-letter code: MSGQFNNSPRGEDKDVEAGTSSFTEYEDSPFDIASTKNAPVERLRRWRQAALVLNASRRFRYTLDLKREEDKKQMLRKMRAHAQAIRAAHLFKAAASRVTGIASPLPTPGGGDFGIGQEQIVSISRDQNIGALQELGGVRGLSDLLKTNLEKGIHGDDDDILKRKSAFGSNTYPQKKGRSFWRFVWEASQDLTLIILIVAAVASLALGIKTEGIEKGWYDGISIAFAVLLVIVVTATSDYRQSLQFQNLNEEKRNIRLEVTRDGRRVEISIYDIVVGDVIPLNIGDQVPADGVLVAGHSLAVDESSMTGESKIVQKNSTKHPFLMSGCKVADGNGTMLVTGVGVNTEWGLLMASVSEDNGGETPLQVRLNGVATFIGIVGLTVAGVVLFVLVVRYFTGHTKNEQGGPQFIGGKTKFEHVLDDLVEIFTVAVTIVVVAVPEGLPLAVTLTLAYSMRKMMADKALVRRLSACETMGSATTICSDKTGTLTLNEMTVVECYAGLQKMDSPDSSSKLPSAFTSILVEGIAHNTTGSVFRSESGEIQVSGSPTERAILNWAIKLGMDFDALKSESSAVQFFPFNSEKKRGGVAVKSPDSSVHIHWKGAAEIVLGSCTHYMDESESFVDMSEDKMGGLKDAIDDMAARSLRCVAIAFRTFEADKIPTDEEQLSRWELPEDDLILLAIVGIKDPCRPGVKNSVLLCQQAGVKVRMVTGDNIQTAKAIALECGILASDSDASEPNLIEGKVFRSYSEEERDRICEEISVMGRSSPNDKLLLVQSLKRRGHVVAVTGDGTNDAPALHEADIGLAMGIQGTEVAKEKSDIIILDDNFESVVKVVRWGRSVYANIQKFIQFQLTVNVAALVINVVAAISAGEVPLTAVQLLWVNLIMDTLGALALATEPPTDHLMDRAPVGRREPLITNIMWRNLFIQAMYQVTVLLILNFRGISILHLKSKPNAERVKNTVIFNAFVICQVFNEFNARKPDEINIFRGVLRNHLFVGIISITIVLQVVIVEFLGTFASTTKLDWEMWLVCIGIGSISWPLAVIGKLIPVPETPVSQYFRINRWRRNSSG.

The interval 1 to 29 (MSGQFNNSPRGEDKDVEAGTSSFTEYEDS) is disordered. Position 2 is an N-acetylserine (serine 2). Residues 2–180 (SGQFNNSPRG…NTYPQKKGRS (179 aa)) are Cytoplasmic-facing. The segment at 42-53 (ERLRRWRQAALV) is interaction with calmodulin. A helical transmembrane segment spans residues 181-201 (FWRFVWEASQDLTLIILIVAA). At 202 to 219 (VASLALGIKTEGIEKGWY) the chain is on the lumenal side. The helical transmembrane segment at 220-240 (DGISIAFAVLLVIVVTATSDY) threads the bilayer. Over 241–369 (RQSLQFQNLN…GGETPLQVRL (129 aa)) the chain is Cytoplasmic. Residues 370–389 (NGVATFIGIVGLTVAGVVLF) traverse the membrane as a helical segment. Topologically, residues 390–426 (VLVVRYFTGHTKNEQGGPQFIGGKTKFEHVLDDLVEI) are lumenal. The chain crosses the membrane as a helical span at residues 427–444 (FTVAVTIVVVAVPEGLPL). Topologically, residues 445–844 (AVTLTLAYSM…RWGRSVYANI (400 aa)) are cytoplasmic. Aspartate 482 functions as the 4-aspartylphosphate intermediate in the catalytic mechanism. Positions 789 and 793 each coordinate Mg(2+). Residues 845-863 (QKFIQFQLTVNVAALVINV) traverse the membrane as a helical segment. Topologically, residues 864 to 874 (VAAISAGEVPL) are lumenal. The helical transmembrane segment at 875-895 (TAVQLLWVNLIMDTLGALALA) threads the bilayer. Over 896-915 (TEPPTDHLMDRAPVGRREPL) the chain is Cytoplasmic. A helical membrane pass occupies residues 916-938 (ITNIMWRNLFIQAMYQVTVLLIL). At 939–951 (NFRGISILHLKSK) the chain is on the lumenal side. Residues 952–973 (PNAERVKNTVIFNAFVICQVFN) traverse the membrane as a helical segment. Residues 974-991 (EFNARKPDEINIFRGVLR) are Cytoplasmic-facing. A helical transmembrane segment spans residues 992–1013 (NHLFVGIISITIVLQVVIVEFL). Residues 1014–1023 (GTFASTTKLD) are Lumenal-facing. Residues 1024 to 1045 (WEMWLVCIGIGSISWPLAVIGK) form a helical membrane-spanning segment. At 1046–1069 (LIPVPETPVSQYFRINRWRRNSSG) the chain is on the cytoplasmic side.

This sequence belongs to the cation transport ATPase (P-type) (TC 3.A.3) family. Type IIB subfamily.

It is found in the membrane. The catalysed reaction is Ca(2+)(in) + ATP + H2O = Ca(2+)(out) + ADP + phosphate + H(+). With respect to regulation, activated by calmodulin. Its function is as follows. This magnesium-dependent enzyme catalyzes the hydrolysis of ATP coupled with the translocation of calcium from the cytosol into the endoplasmic reticulum. This is Calcium-transporting ATPase 10, plasma membrane-type (ACA10) from Arabidopsis thaliana (Mouse-ear cress).